The following is an 85-amino-acid chain: Progonadoliberin-2 (85 aa).

The signal sequence occupies residues 1-23 (MCASRLVLLLGLLLCVGAHLSSG). Pyrrolidone carboxylic acid is present on Gln24. Gly33 is subject to Glycine amide.

It belongs to the GnRH family. Midbrain tegmentum.

It localises to the secreted. Its function is as follows. Stimulates the secretion of gonadotropins. In Verasper moseri (Barfin flounder), this protein is Progonadoliberin-2 (gnrh2).